The primary structure comprises 336 residues: Mitochondrial thiamine diphosphate carrier 1 (336 aa).

Transmembrane regions (helical) follow at residues 11–27, 88–105, 127–150, 182–199, 230–246, and 303–322; these read RRAL…GGIS, VPAL…FTVL, YLSY…FDLL, LYSG…YAGL, SVSS…AGTF, and GLFP…FVVY. Solcar repeat units follow at residues 11–111, 124–210, and 231–328; these read RRAL…LKTF, LSPY…FKRS, and VSSF…ISDW.

It belongs to the mitochondrial carrier (TC 2.A.29) family. Ubiquitous with highest expression in pollen.

Its subcellular location is the mitochondrion inner membrane. Mitochondrial transporter that mediates uptake of thiamine diphosphate (ThDP) into mitochondria. The chain is Mitochondrial thiamine diphosphate carrier 1 from Zea mays (Maize).